A 154-amino-acid chain; its full sequence is MSKRNQVSYVRPAEPAFLARFKERVGYREGPTVETKRIQPQPPDEDGDHSDKEDEQPQVVVLKKGDLSVEEVMKIKAEIKAAKADEEPTPADGRIIYRKPVKHPSDEKYSGLTASSKKKKPNEDEVNQDSVKKNSQKQIKNSSLLSFDNEDENE.

Disordered stretches follow at residues 23–63 (ERVG…VVLK) and 79–154 (IKAA…DENE). Residues 43-56 (PDEDGDHSDKEDEQ) are compositionally biased toward acidic residues. A Phosphoserine modification is found at Ser-50. N6-acetyllysine is present on Lys-108. Ser-146 carries the post-translational modification Phosphoserine.

This is an uncharacterized protein from Homo sapiens (Human).